Here is a 179-residue protein sequence, read N- to C-terminus: ATP synthase subunit delta (179 aa).

This sequence belongs to the ATPase delta chain family. As to quaternary structure, F-type ATPases have 2 components, F(1) - the catalytic core - and F(0) - the membrane proton channel. F(1) has five subunits: alpha(3), beta(3), gamma(1), delta(1), epsilon(1). F(0) has three main subunits: a(1), b(2) and c(10-14). The alpha and beta chains form an alternating ring which encloses part of the gamma chain. F(1) is attached to F(0) by a central stalk formed by the gamma and epsilon chains, while a peripheral stalk is formed by the delta and b chains.

It is found in the cell inner membrane. Functionally, f(1)F(0) ATP synthase produces ATP from ADP in the presence of a proton or sodium gradient. F-type ATPases consist of two structural domains, F(1) containing the extramembraneous catalytic core and F(0) containing the membrane proton channel, linked together by a central stalk and a peripheral stalk. During catalysis, ATP synthesis in the catalytic domain of F(1) is coupled via a rotary mechanism of the central stalk subunits to proton translocation. Its function is as follows. This protein is part of the stalk that links CF(0) to CF(1). It either transmits conformational changes from CF(0) to CF(1) or is implicated in proton conduction. This chain is ATP synthase subunit delta, found in Anaeromyxobacter dehalogenans (strain 2CP-1 / ATCC BAA-258).